The following is a 322-amino-acid chain: MSEHQWKPTASIQTLLSRAKIIAEIRQFFSERGLLEVETPILSEFGVTDVHLSTFSTKLISPFQKKEKTLWLSTSPEYPMKRLLSAGSGAIFQLCKVFRNEEAGKKHSPEFTMLEWYRPYFDMYRLINEVDDLLQYILDCEPAESMSYQFAFQEYVGIDPLSASQDKLIEKAKEYCLENAEREDRDTLLQFLFNVAVESQIGKDKPVAIYHFPATQAALAQISSEDHRVAERFEFYYKGLELANGFCELTDANEQRHRFEQDNKQRERLGLPIHQIDERFLAALKAGVPNCSGVALGVDRLIMIALGLENINEVIAFSIENA.

Residue 75-77 (SPE) participates in substrate binding. ATP is bound at residue 99–101 (RNE). Residue Tyr117 participates in substrate binding. Residue 241-242 (EL) participates in ATP binding. Glu248 contributes to the substrate binding site. Gly297 lines the ATP pocket.

This sequence belongs to the class-II aminoacyl-tRNA synthetase family. EpmA subfamily. As to quaternary structure, homodimer.

The catalysed reaction is D-beta-lysine + L-lysyl-[protein] + ATP = N(6)-((3R)-3,6-diaminohexanoyl)-L-lysyl-[protein] + AMP + diphosphate + H(+). Its function is as follows. With EpmB is involved in the beta-lysylation step of the post-translational modification of translation elongation factor P (EF-P). Catalyzes the ATP-dependent activation of (R)-beta-lysine produced by EpmB, forming a lysyl-adenylate, from which the beta-lysyl moiety is then transferred to the epsilon-amino group of a conserved specific lysine residue in EF-P. The chain is Elongation factor P--(R)-beta-lysine ligase from Avibacterium paragallinarum (Haemophilus gallinarum).